The following is a 707-amino-acid chain: Coiled-coil domain-containing protein 177 (707 aa).

2 disordered regions span residues 1-65 (MVDP…EGGR) and 183-294 (PSAG…SALT). Low complexity-rich tracts occupy residues 38–49 (AASSASASASAA), 183–215 (PSAG…PSSA), and 243–258 (ALSS…YSGE). Ser-311 is modified (phosphoserine). Positions 364–605 (GQWELQRVHA…LQHATQVAEE (242 aa)) form a coiled coil. 4 disordered regions span residues 372–426 (HAKQ…RSEE), 454–581 (KLQQ…EREH), 597–637 (QHAT…RDED), and 652–707 (ERSE…LDRK). 7 stretches are compositionally biased toward basic and acidic residues: residues 377–392 (RERE…EQGR), 399–426 (VEER…RSEE), 454–484 (KLQQ…ERAQ), 491–514 (QRQE…RHEA), 543–581 (ENYE…EREH), 618–637 (RLEK…RDED), and 652–664 (ERSE…RRSA). Residues 665–675 (LESARSTARAS) are compositionally biased toward low complexity. Residues 677–707 (HVREKVREETNTRSFDRMVREAQLHASLDRK) show a composition bias toward basic and acidic residues.

The protein is Coiled-coil domain-containing protein 177 (CCDC177) of Homo sapiens (Human).